A 259-amino-acid polypeptide reads, in one-letter code: Phosphate import ATP-binding protein PstB (259 aa).

The 245-residue stretch at 10–254 (AESRNLSFYY…PSRKETEDYI (245 aa)) folds into the ABC transporter domain. 43–50 (GPSGCGKS) lines the ATP pocket.

This sequence belongs to the ABC transporter superfamily. Phosphate importer (TC 3.A.1.7) family. In terms of assembly, the complex is composed of two ATP-binding proteins (PstB), two transmembrane proteins (PstC and PstA) and a solute-binding protein (PstS).

The protein resides in the cell inner membrane. It carries out the reaction phosphate(out) + ATP + H2O = ADP + 2 phosphate(in) + H(+). Part of the ABC transporter complex PstSACB involved in phosphate import. Responsible for energy coupling to the transport system. The chain is Phosphate import ATP-binding protein PstB from Methylobacillus flagellatus (strain ATCC 51484 / DSM 6875 / VKM B-1610 / KT).